Reading from the N-terminus, the 177-residue chain is Large ribosomal subunit protein uL6 (177 aa).

Belongs to the universal ribosomal protein uL6 family. Part of the 50S ribosomal subunit.

In terms of biological role, this protein binds to the 23S rRNA, and is important in its secondary structure. It is located near the subunit interface in the base of the L7/L12 stalk, and near the tRNA binding site of the peptidyltransferase center. This is Large ribosomal subunit protein uL6 from Afipia carboxidovorans (strain ATCC 49405 / DSM 1227 / KCTC 32145 / OM5) (Oligotropha carboxidovorans).